A 486-amino-acid polypeptide reads, in one-letter code: Malonate-semialdehyde dehydrogenase (486 aa).

NAD(+) contacts are provided by Phe154, Lys178, Glu181, Arg182, and Ser231. Cys286 acts as the Nucleophile in catalysis. Glu386 contributes to the NAD(+) binding site.

It belongs to the aldehyde dehydrogenase family. IolA subfamily. Homotetramer.

It carries out the reaction 3-oxopropanoate + NAD(+) + CoA + H2O = hydrogencarbonate + acetyl-CoA + NADH + H(+). The enzyme catalyses 2-methyl-3-oxopropanoate + NAD(+) + CoA + H2O = propanoyl-CoA + hydrogencarbonate + NADH + H(+). Its pathway is polyol metabolism; myo-inositol degradation into acetyl-CoA; acetyl-CoA from myo-inositol: step 7/7. Its function is as follows. Catalyzes the oxidation of malonate semialdehyde (MSA) and methylmalonate semialdehyde (MMSA) into acetyl-CoA and propanoyl-CoA, respectively. Is involved in a myo-inositol catabolic pathway. Bicarbonate, and not CO2, is the end-product of the enzymatic reaction. The polypeptide is Malonate-semialdehyde dehydrogenase (Bacillus cereus (strain AH187)).